The chain runs to 138 residues: Acidic phospholipase A2 2 (138 aa).

An N-terminal signal peptide occupies residues 1–16 (MRTLWIVAVLLLGVEG). 7 cysteine pairs are disulfide-bonded: Cys-42–Cys-131, Cys-44–Cys-60, Cys-59–Cys-111, Cys-65–Cys-138, Cys-66–Cys-104, Cys-73–Cys-97, and Cys-91–Cys-102. 3 residues coordinate Ca(2+): Tyr-43, Gly-45, and Gly-47. His-63 is a catalytic residue. Asp-64 is a Ca(2+) binding site. Asp-105 is a catalytic residue.

It belongs to the phospholipase A2 family. Group II subfamily. D49 sub-subfamily. The cofactor is Ca(2+). As to expression, expressed by the venom gland.

It is found in the secreted. It catalyses the reaction a 1,2-diacyl-sn-glycero-3-phosphocholine + H2O = a 1-acyl-sn-glycero-3-phosphocholine + a fatty acid + H(+). Snake venom phospholipase A2 (PLA2) that displays edema-inducing activities, exhibits indirect hemolytic activity, and inhibits ADP-induced platelet aggregation. PLA2 catalyzes the calcium-dependent hydrolysis of the 2-acyl groups in 3-sn-phosphoglycerides. The chain is Acidic phospholipase A2 2 from Protobothrops mucrosquamatus (Taiwan habu).